Reading from the N-terminus, the 340-residue chain is Phosphate acyltransferase (340 aa).

This sequence belongs to the PlsX family. Homodimer. Probably interacts with PlsY.

Its subcellular location is the cytoplasm. The enzyme catalyses a fatty acyl-[ACP] + phosphate = an acyl phosphate + holo-[ACP]. Its pathway is lipid metabolism; phospholipid metabolism. Its function is as follows. Catalyzes the reversible formation of acyl-phosphate (acyl-PO(4)) from acyl-[acyl-carrier-protein] (acyl-ACP). This enzyme utilizes acyl-ACP as fatty acyl donor, but not acyl-CoA. The chain is Phosphate acyltransferase from Nostoc punctiforme (strain ATCC 29133 / PCC 73102).